A 390-amino-acid chain; its full sequence is MLEFEQGFNHLATLKVIGVGGGGNNAVNRMIDHGMNNVEFIAINTDGQALNLSKAESKIQIGEKLTRGLGAGANPEIGKKAAEESREQIEDAIQGADMVFVTSGMGGGTGTGAAPVVAKIAKEMGALTVGVVTRPFSFEGRKRQTQAAAGVEAMKAAVDTLIVIPNDRLLDIVDKSTPMMEAFKEADNVLRQGVQGISDLIAVSGEVNLDFADVKTIMSNQGSALMGIGVSSGENRAVEAAKKAISSPLLETSIVGAQGVLMNITGGESLSLFEAQEAADIVQDAADEDVNMIFGTVINPELQDEIVVTVIATGFDDKPTSHGRKSGSTGFGTSVNTSSNATSKDESFTSNSSNAQATDSVSERTHTTKEDDIPSFIRNREERRSRRTRR.

GTP is bound by residues 21–25, 108–110, E139, R143, and D187; these read GGGNN and GTG. The tract at residues 315 to 390 is disordered; that stretch reads FDDKPTSHGR…EERRSRRTRR (76 aa). Polar residues predominate over residues 326–360; sequence SGSTGFGTSVNTSSNATSKDESFTSNSSNAQATDS. A compositionally biased stretch (basic and acidic residues) spans 361–384; that stretch reads VSERTHTTKEDDIPSFIRNREERR.

The protein belongs to the FtsZ family. As to quaternary structure, homodimer. Polymerizes to form a dynamic ring structure in a strictly GTP-dependent manner. Interacts directly with several other division proteins.

It is found in the cytoplasm. Functionally, essential cell division protein that forms a contractile ring structure (Z ring) at the future cell division site. The regulation of the ring assembly controls the timing and the location of cell division. One of the functions of the FtsZ ring is to recruit other cell division proteins to the septum to produce a new cell wall between the dividing cells. Binds GTP and shows GTPase activity. This Staphylococcus aureus (strain NCTC 8325 / PS 47) protein is Cell division protein FtsZ.